The primary structure comprises 440 residues: UDP-glycosyltransferase 87A1 (440 aa).

Residues Ser-263, 312–314 (CDQ), 329–337 (HCGYNSTLE), and 351–354 (FWDQ) contribute to the UDP-alpha-D-glucose site.

Belongs to the UDP-glycosyltransferase family.

The chain is UDP-glycosyltransferase 87A1 (UGT87A1) from Arabidopsis thaliana (Mouse-ear cress).